A 134-amino-acid chain; its full sequence is Large-conductance mechanosensitive channel (134 aa).

Transmembrane regions (helical) follow at residues 16–36 (VIDL…VTAL) and 81–101 (GDFL…FIIV).

The protein belongs to the MscL family. As to quaternary structure, homopentamer.

The protein resides in the cell inner membrane. Channel that opens in response to stretch forces in the membrane lipid bilayer. May participate in the regulation of osmotic pressure changes within the cell. The polypeptide is Large-conductance mechanosensitive channel (Xylella fastidiosa (strain M12)).